The primary structure comprises 271 residues: Homeobox protein pal-1 (271 aa).

Disordered regions lie at residues 1 to 25 (MSVD…TNVN), 100 to 135 (PPLS…ASSS), and 178 to 202 (GSAG…TNNV). 2 stretches are compositionally biased toward low complexity: residues 100–117 (PPLS…YPSP) and 125–135 (STSSGIGASSS). Polar residues predominate over residues 189–202 (DTKSLPTGPGTNNV). The segment at residues 207–266 (ADKYRMVYSDYQRLELEKEFHTSAFITSDRKSQLSTMLSLTERQIKIWFQNRRAKDRRDK) is a DNA-binding region (homeobox).

It belongs to the Caudal homeobox family. Interacts with tir-1 and let-756.

It is found in the nucleus. Its subcellular location is the chromosome. The protein localises to the centromere. It localises to the kinetochore. Its function is as follows. Transcriptional activator. Interacts with promoter regions for tbx-8.9, tbx-9, elt-1, hnd-1, scrt-1, and vab-7 genes. Binds the sequence ATTTATGAC. Binds to the enhancer region of the hlh-1 gene promoter during embryonic body wall muscle development. Activates the gene for mab-5 in embryo development. Necessary for vab-7 expression in C blastomeres in the posterior of embryos. Required for posterior V6 neuroectoblast cell fate specification during postembryonic neurogenesis (patterning) which generates the characteristic ray lineage during male tail development. Binds to ced-3 promoter and activated expression which is crucial for tail-spike cell death. Has a role in E cell specification in endoderm development and body wall muscle development. This Caenorhabditis briggsae protein is Homeobox protein pal-1.